A 206-amino-acid polypeptide reads, in one-letter code: Large ribosomal subunit protein uL4 (206 aa).

The protein belongs to the universal ribosomal protein uL4 family. In terms of assembly, part of the 50S ribosomal subunit.

In terms of biological role, one of the primary rRNA binding proteins, this protein initially binds near the 5'-end of the 23S rRNA. It is important during the early stages of 50S assembly. It makes multiple contacts with different domains of the 23S rRNA in the assembled 50S subunit and ribosome. Forms part of the polypeptide exit tunnel. This is Large ribosomal subunit protein uL4 from Methylorubrum populi (strain ATCC BAA-705 / NCIMB 13946 / BJ001) (Methylobacterium populi).